The sequence spans 117 residues: Large ribosomal subunit protein bL20 (117 aa).

The protein belongs to the bacterial ribosomal protein bL20 family.

Binds directly to 23S ribosomal RNA and is necessary for the in vitro assembly process of the 50S ribosomal subunit. It is not involved in the protein synthesizing functions of that subunit. This chain is Large ribosomal subunit protein bL20, found in Wigglesworthia glossinidia brevipalpis.